The following is a 416-amino-acid chain: Ribulose bisphosphate carboxylase large chain (416 aa).

The substrate site is built by asparagine 100 and threonine 150. Lysine 152 serves as the catalytic Proton acceptor. Lysine 154 lines the substrate pocket. Residues lysine 178, aspartate 180, and glutamate 181 each coordinate Mg(2+). N6-carboxylysine is present on lysine 178. The active-site Proton acceptor is the histidine 271. The substrate site is built by arginine 272, histidine 304, and serine 356.

It belongs to the RuBisCO large chain family. Type I subfamily. In terms of assembly, heterohexadecamer of 8 large chains and 8 small chains; disulfide-linked. The disulfide link is formed within the large subunit homodimers. The cofactor is Mg(2+). Post-translationally, the disulfide bond which can form in the large chain dimeric partners within the hexadecamer appears to be associated with oxidative stress and protein turnover.

The protein localises to the plastid. It localises to the chloroplast. The catalysed reaction is 2 (2R)-3-phosphoglycerate + 2 H(+) = D-ribulose 1,5-bisphosphate + CO2 + H2O. It carries out the reaction D-ribulose 1,5-bisphosphate + O2 = 2-phosphoglycolate + (2R)-3-phosphoglycerate + 2 H(+). Its function is as follows. RuBisCO catalyzes two reactions: the carboxylation of D-ribulose 1,5-bisphosphate, the primary event in carbon dioxide fixation, as well as the oxidative fragmentation of the pentose substrate in the photorespiration process. Both reactions occur simultaneously and in competition at the same active site. The sequence is that of Ribulose bisphosphate carboxylase large chain (rbcL) from Cheiropleuria bicuspis (Fern).